Here is a 230-residue protein sequence, read N- to C-terminus: Orotidine 5'-phosphate decarboxylase (230 aa).

Residues D8, K32, D59–T68, T118, R178, Q187, G207, and R208 contribute to the substrate site. Catalysis depends on K61, which acts as the Proton donor.

The protein belongs to the OMP decarboxylase family. Type 1 subfamily. Homodimer.

It carries out the reaction orotidine 5'-phosphate + H(+) = UMP + CO2. It participates in pyrimidine metabolism; UMP biosynthesis via de novo pathway; UMP from orotate: step 2/2. Functionally, catalyzes the decarboxylation of orotidine 5'-monophosphate (OMP) to uridine 5'-monophosphate (UMP). In Nautilia profundicola (strain ATCC BAA-1463 / DSM 18972 / AmH), this protein is Orotidine 5'-phosphate decarboxylase.